The primary structure comprises 507 residues: Maturase K (507 aa).

This sequence belongs to the intron maturase 2 family. MatK subfamily.

The protein resides in the plastid. It localises to the chloroplast. Its function is as follows. Usually encoded in the trnK tRNA gene intron. Probably assists in splicing its own and other chloroplast group II introns. This Magnolia champaca (Yellow jade orchid tree) protein is Maturase K.